The primary structure comprises 139 residues: Actin-depolymerizing factor 1 (139 aa).

The ADF-H domain occupies 5-139 (ASGMAVCDEC…SMDIVKSRAL (135 aa)).

The protein belongs to the actin-binding proteins ADF family.

Actin-depolymerizing protein. Severs actin filaments (F-actin) and binds to actin monomers. The polypeptide is Actin-depolymerizing factor 1 (ADF1) (Oryza sativa subsp. japonica (Rice)).